The primary structure comprises 198 residues: Copy number protein (198 aa).

Its subcellular location is the cell membrane. In terms of biological role, involved in copy number control of pIP404. This basic and hydrophobic protein may exert its effect from the cytoplasmic membrane. The protein is Copy number protein (cop) of Clostridium perfringens.